A 444-amino-acid chain; its full sequence is Deoxyguanosinetriphosphate triphosphohydrolase-like protein (444 aa).

The HD domain maps to 66–259 (RLTHSLEAAQ…MELADDIAYG (194 aa)).

Belongs to the dGTPase family. Type 2 subfamily.

The sequence is that of Deoxyguanosinetriphosphate triphosphohydrolase-like protein from Vibrio campbellii (strain ATCC BAA-1116).